Reading from the N-terminus, the 159-residue chain is Succinate dehydrogenase [ubiquinone] cytochrome b small subunit, mitochondrial (159 aa).

The transit peptide at 1-56 (MAVLLKLGVLCSGQGARALLLRSRVVRPAYVSAFLQDQPTQGRCGTQHIHLSPSHH) directs the protein to the mitochondrion. Topologically, residues 57 to 63 (SGSKAAS) are mitochondrial matrix. Residues 64–85 (LHWTSERVVSVLLLGLIPAGYL) traverse the membrane as a helical segment. Residues 86–90 (NPCSV) lie on the Mitochondrial intermembrane side of the membrane. The chain crosses the membrane as a helical span at residues 91–111 (VDYSLAAALTLHSHWGLGQVV). Position 102 (histidine 102) interacts with heme b. Over 112–120 (TDYVHGDTL) the chain is Mitochondrial matrix. Tyrosine 114 is an a ubiquinone binding site. A helical membrane pass occupies residues 121–142 (PKAARAGLLALSALTFAGLCYF). Residues 143–159 (NYHDVGICRAVAMLWKL) are Mitochondrial intermembrane-facing.

The protein belongs to the CybS family. In terms of assembly, component of complex II composed of four subunits: the flavoprotein (FP) SDHA, iron-sulfur protein (IP) SDHB, and a cytochrome b560 composed of SDHC and SDHD.

The protein resides in the mitochondrion inner membrane. Its pathway is carbohydrate metabolism; tricarboxylic acid cycle. In terms of biological role, membrane-anchoring subunit of succinate dehydrogenase (SDH) that is involved in complex II of the mitochondrial electron transport chain and is responsible for transferring electrons from succinate to ubiquinone (coenzyme Q). SDH also oxidizes malate to the non-canonical enol form of oxaloacetate, enol-oxaloacetate. Enol-oxaloacetate, which is a potent inhibitor of the succinate dehydrogenase activity, is further isomerized into keto-oxaloacetate. This chain is Succinate dehydrogenase [ubiquinone] cytochrome b small subunit, mitochondrial (Sdhd), found in Mus musculus (Mouse).